The following is an 80-amino-acid chain: Raniseptin-6 (80 aa).

A signal peptide spans 1–22; that stretch reads MAFLKKSLFLVLFLGIVSLSIC. Residues 23-49 constitute a propeptide that is removed on maturation; the sequence is EEEKREGEEEEKQEEENEELSEEELRE.

It belongs to the frog skin active peptide (FSAP) family. Dermaseptin subfamily. As to expression, expressed by the skin glands.

Its subcellular location is the secreted. Its function is as follows. Has antibacterial activity. In Boana raniceps (Chaco tree frog), this protein is Raniseptin-6.